The sequence spans 434 residues: Cobyrinate a,c-diamide synthase (434 aa).

In terms of domain architecture, GATase cobBQ-type spans 240 to 430 (KAYVAYDSAF…SHFHFSRTRR (191 aa)). The active-site Nucleophile is C322.

This sequence belongs to the CobB/CbiA family. Mg(2+) is required as a cofactor.

It catalyses the reaction cob(II)yrinate + 2 L-glutamine + 2 ATP + 2 H2O = cob(II)yrinate a,c diamide + 2 L-glutamate + 2 ADP + 2 phosphate + 2 H(+). It functions in the pathway cofactor biosynthesis; adenosylcobalamin biosynthesis; cob(II)yrinate a,c-diamide from sirohydrochlorin (anaerobic route): step 10/10. Its function is as follows. Catalyzes the ATP-dependent amidation of the two carboxylate groups at positions a and c of cobyrinate, using either L-glutamine or ammonia as the nitrogen source. The chain is Cobyrinate a,c-diamide synthase from Sulfolobus acidocaldarius (strain ATCC 33909 / DSM 639 / JCM 8929 / NBRC 15157 / NCIMB 11770).